The sequence spans 141 residues: Hemoglobin subunit alpha-1/2 (141 aa).

The region spanning 1-141 is the Globin domain; that stretch reads VLSPADKTNV…VSTVLTSKYR (141 aa). The residue at position 3 (Ser-3) is a Phosphoserine. Residue Lys-7 is modified to N6-succinyllysine. The residue at position 8 (Thr-8) is a Phosphothreonine. Lys-11 is subject to N6-succinyllysine. Lys-16 carries the post-translational modification N6-acetyllysine; alternate. N6-succinyllysine; alternate is present on Lys-16. Tyr-24 carries the post-translational modification Phosphotyrosine. At Ser-35 the chain carries Phosphoserine. At Lys-40 the chain carries N6-succinyllysine. Ser-49 is modified (phosphoserine). Position 58 (His-58) interacts with O2. His-87 contacts heme b. Ser-102 carries the post-translational modification Phosphoserine. Thr-108 bears the Phosphothreonine mark. Position 124 is a phosphoserine (Ser-124). Thr-134 and Thr-137 each carry phosphothreonine. The residue at position 138 (Ser-138) is a Phosphoserine.

This sequence belongs to the globin family. As to quaternary structure, heterotetramer of two alpha chains and two beta chains. Red blood cells.

Functionally, involved in oxygen transport from the lung to the various peripheral tissues. The polypeptide is Hemoglobin subunit alpha-1/2 (Mustela lutreola (European mink)).